Here is a 325-residue protein sequence, read N- to C-terminus: Glutarate 2-hydroxylase (325 aa).

Fe cation is bound by residues H160, D162, and H292.

Belongs to the glutarate hydroxylase family. Homotetramer. Requires Fe(2+) as cofactor.

It carries out the reaction glutarate + 2-oxoglutarate + O2 = (S)-2-hydroxyglutarate + succinate + CO2. It participates in amino-acid degradation. Acts as an alpha-ketoglutarate-dependent dioxygenase catalyzing hydroxylation of glutarate (GA) to L-2-hydroxyglutarate (L2HG). Functions in a L-lysine degradation pathway that proceeds via cadaverine, glutarate and L-2-hydroxyglutarate. The polypeptide is Glutarate 2-hydroxylase (Escherichia coli (strain UTI89 / UPEC)).